A 1075-amino-acid chain; its full sequence is MTTANCGAHDELDFKLVFGEDGAPAPPPPGSRPADLEPDDCASIYIFNVDPPPSTLTTPLCLPHHGLPSHSSVLSPSFQLQSHKNYEGTCEIPESKYSPLGGPKPFECPSIQITSISPNCHQELDAHEDDLQINDPEREFLERPSRDHLYLPLEPSYRESSLSPSPASSISSRSWFSDASSCESLSHIYDDVDSELNEAAARFTLGSPLTSPGGSPGGCPGEETWHQQYGLGHSLSPRQSPCHSPRSSVTDENWLSPRPASGPSSRPTSPCGKRRHSSAEVCYAGSLSPHHSPVPSPGHSPRGSVTEDTWLNASVHGGSGLGPAVFPFQYCVETDIPLKTRKTSEDQAAILPGKLELCSDDQGSLSPARETSIDDGLGSQYPLKKDSCGDQFLSVPSPFTWSKPKPGHTPIFRTSSLPPLDWPLPAHFGQCELKIEVQPKTHHRAHYETEGSRGAVKASTGGHPVVKLLGYNEKPINLQMFIGTADDRYLRPHAFYQVHRITGKTVATASQEIIIASTKVLEIPLLPENNMSASIDCAGILKLRNSDIELRKGETDIGRKNTRVRLVFRVHIPQPSGKVLSLQIASIPVECSQRSAQELPHIEKYSINSCSVNGGHEMVVTGSNFLPESKIIFLEKGQDGRPQWEVEGKIIREKCQGAHIVLEVPPYHNPAVTAAVQVHFYLCNGKRKKSQSQRFTYTPVLMKQEHREEIDLSSVPSLPVPHPAQTQRPSSDSGCSHDSVLSGQRSLICSIPQTYASMVTSSHLPQLQCRDESVSKEQHMIPSPIVHQPFQVTPTPPVGSSYQPMQTNVVYNGPTCLPINAASSQEFDSVLFQQDATLSGLVNLGCQPLSSIPFHSSNSGSTGHLLAHTPHSVHTLPHLQSMGYHCSNTGQRSLSSPVADQITGQPSSQLQPITYGPSHSGSATTASPAASHPLASSPLSGPPSPQLQPMPYQSPSSGTASSPSPATRMHSGQHSTQAQSTGQGGLSAPSSLICHSLCDPASFPPDGATVSIKPEPEDREPNFATIGLQDITLDDVNEIIGRDMSQISVSQGAGVSRQAPLPSPESLDLGRSDGL.

Residue threonine 2 is modified to N-acetylthreonine. The tract at residues 18 to 37 is disordered; the sequence is FGEDGAPAPPPPGSRPADLE. A calcineurin-binding region spans residues 109–114; the sequence is PSIQIT. Positions 205–306 are disordered; sequence LGSPLTSPGG…PGHSPRGSVT (102 aa). 2 repeat units span residues 207–223 and 236–252. Residues 207–308 form a 3 X SP repeats region; the sequence is SPLTSPGGSP…HSPRGSVTED (102 aa). Polar residues predominate over residues 236 to 253; that stretch reads SPRQSPCHSPRSSVTDEN. Over residues 256–270 the composition is skewed to low complexity; sequence SPRPASGPSSRPTSP. Positions 273–275 match the Nuclear localization signal motif; that stretch reads KRR. Copy 3 of the repeat occupies 292 to 308; the sequence is SPVPSPGHSPRGSVTED. Phosphoserine occurs at positions 344 and 372. The RHD domain occupies 415–596; the sequence is SSLPPLDWPL…IPVECSQRSA (182 aa). Residues 444–451 mediate DNA binding; it reads RAHYETEG. The Nuclear localization signal motif lies at 686–688; sequence KRK. Disordered regions lie at residues 711–739 and 887–988; these read DLSSVPSLPVPHPAQTQRPSSDSGCSHDS and SNTG…GLSA. Composition is skewed to polar residues over residues 724–739 and 887–912; these read AQTQRPSSDSGCSHDS and SNTGQRSLSSPVADQITGQPSSQLQP. Low complexity-rich tracts occupy residues 916–939 and 949–967; these read GPSHSGSATTASPAASHPLASSPL and PMPYQSPSSGTASSPSPAT. Over residues 970–981 the composition is skewed to polar residues; sequence HSGQHSTQAQST. Residues 1032-1041 carry the Nuclear export signal motif; it reads TLDDVNEIIG. The tract at residues 1049 to 1075 is disordered; it reads VSQGAGVSRQAPLPSPESLDLGRSDGL. A phosphoserine mark is found at serine 1063 and serine 1066.

NFATC proteins bind to DNA as monomers. Member of the multicomponent NFATC transcription complex that consists of at least two components, a pre-existing cytoplasmic component NFATC2 and an inducible nuclear component NFATC1. Other members such as NFATC4, or members of the activating protein-1 family, MAF, GATA4 and Cbp/p300 can also bind the complex. Component of a promoter-binding complex composed of STAT3, NFATC3 and NFATC4; complex formation is enhanced by calcineurin. Interacts with TRIM17; this interaction prevents NFATC3 nuclear localization. Interacts with and ubiquitinated by STUB1/CHIP; HSPA1A/HSP70 is required as a co-chaperone. Ubiquitinated by STUB1/CHIP, leading to proteasomal degradation. In terms of processing, phosphorylated by NFATC-kinase; dephosphorylated by calcineurin. In terms of tissue distribution, predominantly expressed in thymus and is also found in peripheral blood leukocytes and kidney. Predominantly expressed in skeletal muscle. Also found weakly expressed in the thymus, kidney, testis, spleen, prostate, ovary, small intestine, heart, placenta and pancreas. As to expression, expressed in thymus and kidney. In terms of tissue distribution, expressed in thymus and skeletal muscle.

The protein localises to the cytoplasm. The protein resides in the nucleus. Acts as a regulator of transcriptional activation. Binds to the TNFSF11/RANKL promoter region and promotes TNFSF11 transcription. Binding to the TNFSF11 promoter region is increased by high levels of Ca(2+) which induce NFATC3 expression and may lead to regulation of TNFSF11 expression in osteoblasts. Plays a role in promoting mesenteric arterial wall remodeling in response to the intermittent hypoxia-induced increase in EDN1 and ROCK signaling. As a result NFATC3 colocalizes with F-actin filaments, translocates to the nucleus and promotes transcription of the smooth muscle hypertrophy and differentiation marker ACTA2. Promotes lipopolysaccharide-induced apoptosis and hypertrophy in cardiomyocytes. Following JAK/STAT signaling activation and as part of a complex with NFATC4 and STAT3, binds to the alpha-beta E4 promoter region of CRYAB and activates transcription in cardiomyocytes. In conjunction with NFATC4, involved in embryonic heart development via maintenance of cardiomyocyte survival, proliferation and differentiation. Plays a role in the inducible expression of cytokine genes in T-cells, especially in the induction of the IL-2. Required for thymocyte maturation during DN3 to DN4 transition and during positive selection. Positively regulates macrophage-derived polymicrobial clearance, via binding to the promoter region and promoting transcription of NOS2 resulting in subsequent generation of nitric oxide. Involved in Ca(2+)-mediated transcriptional responses upon Ca(2+) influx via ORAI1 CRAC channels. This is Nuclear factor of activated T-cells, cytoplasmic 3 from Homo sapiens (Human).